We begin with the raw amino-acid sequence, 201 residues long: Protein S40-5 (201 aa).

2 disordered regions span residues 1–39 and 134–178; these read MARGRKLTMSQSERYLGSSYSYGDSNGNSATDESELTEE and SIHE…EGVG. A compositionally biased stretch (low complexity) spans 17–29; that stretch reads GSSYSYGDSNGNS.

It belongs to the senescence regulator S40 family.

It localises to the cytoplasm. In Arabidopsis thaliana (Mouse-ear cress), this protein is Protein S40-5.